The following is a 233-amino-acid chain: Putative cobalt transport protein CbiM (233 aa).

Transmembrane regions (helical) follow at residues 9 to 29 (PPMW…YGIV), 43 to 63 (PLVA…MPSV), 75 to 95 (LGAV…VLLF), 107 to 127 (TLGA…VIVY), 138 to 158 (TVGI…TTAV), and 177 to 197 (IVIY…LTVI).

It belongs to the CbiM family. In terms of assembly, forms an energy-coupling factor (ECF) transporter complex composed of an ATP-binding protein (A component, CbiO), a transmembrane protein (T component, CbiQ) and 2 possible substrate-capture proteins (S components, CbiM and CbiN) of unknown stoichimetry.

It is found in the cell membrane. It participates in cofactor biosynthesis; adenosylcobalamin biosynthesis. Functionally, part of the energy-coupling factor (ECF) transporter complex CbiMNOQ involved in cobalt import. The polypeptide is Putative cobalt transport protein CbiM (Methanocaldococcus jannaschii (strain ATCC 43067 / DSM 2661 / JAL-1 / JCM 10045 / NBRC 100440) (Methanococcus jannaschii)).